A 513-amino-acid chain; its full sequence is Putative ribose/galactose/methyl galactoside import ATP-binding protein 2 (513 aa).

2 ABC transporter domains span residues 24-260 and 270-510; these read LAAD…VGRE and VPIG…VMDL. 56 to 63 provides a ligand contact to ATP; sequence GENGAGKS.

Belongs to the ABC transporter superfamily. Carbohydrate importer 2 (CUT2) (TC 3.A.1.2) family.

The protein resides in the cell inner membrane. It catalyses the reaction D-ribose(out) + ATP + H2O = D-ribose(in) + ADP + phosphate + H(+). It carries out the reaction D-galactose(out) + ATP + H2O = D-galactose(in) + ADP + phosphate + H(+). In terms of biological role, part of an ABC transporter complex involved in carbohydrate import. Could be involved in ribose, galactose and/or methyl galactoside import. Responsible for energy coupling to the transport system. The polypeptide is Putative ribose/galactose/methyl galactoside import ATP-binding protein 2 (Agrobacterium fabrum (strain C58 / ATCC 33970) (Agrobacterium tumefaciens (strain C58))).